Here is a 289-residue protein sequence, read N- to C-terminus: Diaminopimelate epimerase (289 aa).

Asn11 and Asn78 together coordinate substrate. The active-site Proton donor is the Cys87. Substrate contacts are provided by residues 88-89 (GN), Asn163, Asn199, and 217-218 (ER). Cys226 acts as the Proton acceptor in catalysis. A substrate-binding site is contributed by 227–228 (GT).

Belongs to the diaminopimelate epimerase family. Homodimer.

It is found in the cytoplasm. The enzyme catalyses (2S,6S)-2,6-diaminopimelate = meso-2,6-diaminopimelate. Its pathway is amino-acid biosynthesis; L-lysine biosynthesis via DAP pathway; DL-2,6-diaminopimelate from LL-2,6-diaminopimelate: step 1/1. In terms of biological role, catalyzes the stereoinversion of LL-2,6-diaminopimelate (L,L-DAP) to meso-diaminopimelate (meso-DAP), a precursor of L-lysine and an essential component of the bacterial peptidoglycan. The chain is Diaminopimelate epimerase from Mycolicibacterium gilvum (strain PYR-GCK) (Mycobacterium gilvum (strain PYR-GCK)).